Here is a 330-residue protein sequence, read N- to C-terminus: Src kinase-associated phosphoprotein 2-A (330 aa).

Residues 53-77 are disordered; the sequence is QDFQDKAETDDQEENDGFSLPPDAV. One can recognise a PH domain in the interval 105 to 208; sequence DYLRAGYLEK…WINVIMNARG (104 aa). A disordered region spans residues 228–261; that stretch reads SHEEDIYEELPEESEKPVTGSETPKATPVPVNNT. Polar residues predominate over residues 247 to 261; that stretch reads GSETPKATPVPVNNT. An SH3 domain is found at 268–329; sequence DYANFYRGLW…PKAYIIEMYD (62 aa).

Belongs to the SKAP family. Phosphorylated on tyrosines.

The protein localises to the cytoplasm. In terms of biological role, may be involved in B-cell and macrophage adhesion processes. May play a role in src signaling pathway. This chain is Src kinase-associated phosphoprotein 2-A (skap2-a), found in Xenopus laevis (African clawed frog).